Here is a 671-residue protein sequence, read N- to C-terminus: DNA ligase (671 aa).

Residues 32-36, 81-82, and Glu-113 contribute to the NAD(+) site; these read DAEYD and SL. The active-site N6-AMP-lysine intermediate is the Lys-115. 4 residues coordinate NAD(+): Arg-136, Glu-173, Lys-290, and Lys-314. The Zn(2+) site is built by Cys-408, Cys-411, Cys-426, and Cys-432. The region spanning 593 to 671 is the BRCT domain; it reads EIDSPFAGKT…EAEMIRLLGA (79 aa).

This sequence belongs to the NAD-dependent DNA ligase family. LigA subfamily. Mg(2+) is required as a cofactor. Requires Mn(2+) as cofactor.

The catalysed reaction is NAD(+) + (deoxyribonucleotide)n-3'-hydroxyl + 5'-phospho-(deoxyribonucleotide)m = (deoxyribonucleotide)n+m + AMP + beta-nicotinamide D-nucleotide.. Functionally, DNA ligase that catalyzes the formation of phosphodiester linkages between 5'-phosphoryl and 3'-hydroxyl groups in double-stranded DNA using NAD as a coenzyme and as the energy source for the reaction. It is essential for DNA replication and repair of damaged DNA. The chain is DNA ligase from Salmonella newport (strain SL254).